Consider the following 103-residue polypeptide: uncharacterized protein (103 aa).

A helical membrane pass occupies residues 35–57; sequence PFVSMFQTFLEVLTATVLAFTAY.

The protein localises to the host membrane. This is an uncharacterized protein from Acidianus bottle-shaped virus (isolate Italy/Pozzuoli) (ABV).